Consider the following 664-residue polypeptide: Fructose-1,6-bisphosphatase class 3 (664 aa).

The protein belongs to the FBPase class 3 family. Mn(2+) serves as cofactor.

It carries out the reaction beta-D-fructose 1,6-bisphosphate + H2O = beta-D-fructose 6-phosphate + phosphate. It functions in the pathway carbohydrate biosynthesis; gluconeogenesis. This chain is Fructose-1,6-bisphosphatase class 3, found in Bacteroides fragilis (strain YCH46).